Consider the following 255-residue polypeptide: Triosephosphate isomerase (255 aa).

Substrate is bound at residue asparagine 9 to lysine 11. Residue histidine 95 is the Electrophile of the active site. The active-site Proton acceptor is the glutamate 167. Residues glycine 173, serine 212, and glycine 233–glycine 234 each bind substrate.

The protein belongs to the triosephosphate isomerase family. As to quaternary structure, homodimer.

The protein localises to the cytoplasm. The catalysed reaction is D-glyceraldehyde 3-phosphate = dihydroxyacetone phosphate. It functions in the pathway carbohydrate biosynthesis; gluconeogenesis. The protein operates within carbohydrate degradation; glycolysis; D-glyceraldehyde 3-phosphate from glycerone phosphate: step 1/1. In terms of biological role, involved in the gluconeogenesis. Catalyzes stereospecifically the conversion of dihydroxyacetone phosphate (DHAP) to D-glyceraldehyde-3-phosphate (G3P). The sequence is that of Triosephosphate isomerase from Serratia proteamaculans (strain 568).